Consider the following 104-residue polypeptide: Small ribosomal subunit protein uS10 (104 aa).

This sequence belongs to the universal ribosomal protein uS10 family. In terms of assembly, part of the 30S ribosomal subunit.

Its function is as follows. Involved in the binding of tRNA to the ribosomes. The sequence is that of Small ribosomal subunit protein uS10 from Gloeobacter violaceus (strain ATCC 29082 / PCC 7421).